The sequence spans 629 residues: DNA-directed RNA polymerase subunit beta' (629 aa).

Residues cysteine 70, cysteine 72, cysteine 85, and cysteine 88 each contribute to the Zn(2+) site. Positions 472, 474, and 476 each coordinate Mg(2+).

It belongs to the RNA polymerase beta' chain family. RpoC1 subfamily. As to quaternary structure, in plastids the minimal PEP RNA polymerase catalytic core is composed of four subunits: alpha, beta, beta', and beta''. When a (nuclear-encoded) sigma factor is associated with the core the holoenzyme is formed, which can initiate transcription. Mg(2+) serves as cofactor. Requires Zn(2+) as cofactor.

It is found in the plastid. The protein resides in the chloroplast. The catalysed reaction is RNA(n) + a ribonucleoside 5'-triphosphate = RNA(n+1) + diphosphate. Its function is as follows. DNA-dependent RNA polymerase catalyzes the transcription of DNA into RNA using the four ribonucleoside triphosphates as substrates. This Porphyra purpurea (Red seaweed) protein is DNA-directed RNA polymerase subunit beta'.